Here is a 136-residue protein sequence, read N- to C-terminus: Small cardioactive peptides (136 aa).

The N-terminal stretch at 1–24 (METSVSRVTVSLTLLVLIICSADA) is a signal peptide. Methionine amide occurs at positions 33 and 46. Residues 49-135 (SQMKTETGTD…VLSKLKSLLQ (87 aa)) constitute a propeptide, carboxy-terminal peptide.

The protein belongs to the SCP family. Contains three disulfide bonds. Highly expressed in the buccal ganglion.

It is found in the secreted. Functionally, involved in the stimulation of contractile activity in the gut, the increase of the amplitude of the heart beat, and enhancement of the contractile response of the radula closer muscle. The protein is Small cardioactive peptides of Aplysia californica (California sea hare).